The sequence spans 510 residues: 2,3-bisphosphoglycerate-independent phosphoglycerate mutase (510 aa).

Mn(2+) contacts are provided by Asp-15 and Ser-65. Ser-65 acts as the Phosphoserine intermediate in catalysis. Substrate is bound by residues His-126, 155–156, Arg-187, Arg-193, 259–262, and Lys-332; these read RD and RPDR. Positions 399, 403, 440, 441, and 458 each coordinate Mn(2+).

Belongs to the BPG-independent phosphoglycerate mutase family. Requires Mn(2+) as cofactor.

The protein resides in the plastid. Its subcellular location is the chloroplast. It catalyses the reaction (2R)-2-phosphoglycerate = (2R)-3-phosphoglycerate. The protein operates within carbohydrate degradation; glycolysis; pyruvate from D-glyceraldehyde 3-phosphate: step 3/5. Functionally, catalyzes the interconversion of 2-phosphoglycerate and 3-phosphoglycerate. The chain is 2,3-bisphosphoglycerate-independent phosphoglycerate mutase from Antithamnion sp. (Red alga).